A 254-amino-acid chain; its full sequence is UPF0246 protein CPF_2407 (254 aa).

This sequence belongs to the UPF0246 family.

The polypeptide is UPF0246 protein CPF_2407 (Clostridium perfringens (strain ATCC 13124 / DSM 756 / JCM 1290 / NCIMB 6125 / NCTC 8237 / Type A)).